Here is a 118-residue protein sequence, read N- to C-terminus: MTRVKRGNVARKRRNKILKLAKGFRGSHSTLFRTANQQVMKALRSAYRDRKKKKRDFRRLWITRINAASRQHGLSYSQLIGNLKKADIQLNRKMLAQLAVLDPASFGKVAELASQAKG.

This sequence belongs to the bacterial ribosomal protein bL20 family.

Binds directly to 23S ribosomal RNA and is necessary for the in vitro assembly process of the 50S ribosomal subunit. It is not involved in the protein synthesizing functions of that subunit. This is Large ribosomal subunit protein bL20 from Nostoc punctiforme (strain ATCC 29133 / PCC 73102).